We begin with the raw amino-acid sequence, 597 residues long: MLRIAHRLDLQLRAAMDRAFPEQAAAARQASQPLDPQLAPASKPEFGDFQANGALALAKPLKQAPRQIATAIVAQLQADPAFTDLCLEPQIAGPGFINLTVRPERLAAEVSARLGDQRLGVPAVEQAAPVVVDFSSPNIAKEMHVGHLRSTIIGDSLARVLEFRGHPVLRLNHVGDWGTQFGMLITHLKQVAPDALDTADAVDLGDLVAFYREAKKRFDDDEAFQTTSREEVVKLQGGDPVSLKAWGLLCDQSRREFQKIYDRLDIRLNERGESFYNPFLPAVIDGLKDAELLVTDDGAQCVFLEGVQGKDGKPLPVIVQKSDGGFNYATTDLAAIRYRFGAAPDGDDARRVIYVTDAGQANHFAGVFQVAQRAGWIPEGARLEHVPFGLVQGEDGKKLKTRAGDTVRLRDLLDEAVERAETDLRSRLNEEERSESEEFIQHVAGTVGLAAVKYADLSQNRITNYQFSFDRMLALQGNTAPYLLYAVVRIAGIARKGGDLEVLTGQLQFSEPQEWALVRELLKFDAVIAEVEEELLPNRLCSYLFELSQVFNRFYDQVPVLKADAEALPSRLALCRLTADTLKSGLGLLGIPTLDRM.

Residues 23–32 show a composition bias toward low complexity; that stretch reads QAAAARQASQ. Residues 23–43 are disordered; the sequence is QAAAARQASQPLDPQLAPASK. The 'HIGH' region motif lies at 137–147; sequence PNIAKEMHVGH.

This sequence belongs to the class-I aminoacyl-tRNA synthetase family. Monomer.

It localises to the cytoplasm. The enzyme catalyses tRNA(Arg) + L-arginine + ATP = L-arginyl-tRNA(Arg) + AMP + diphosphate. The polypeptide is Arginine--tRNA ligase (Synechococcus sp. (strain WH7803)).